The chain runs to 237 residues: Ubiquinone biosynthesis O-methyltransferase (237 aa).

The S-adenosyl-L-methionine site is built by Arg-38, Gly-58, Asp-79, and Met-124.

This sequence belongs to the methyltransferase superfamily. UbiG/COQ3 family.

It carries out the reaction a 3-demethylubiquinol + S-adenosyl-L-methionine = a ubiquinol + S-adenosyl-L-homocysteine + H(+). The catalysed reaction is a 3-(all-trans-polyprenyl)benzene-1,2-diol + S-adenosyl-L-methionine = a 2-methoxy-6-(all-trans-polyprenyl)phenol + S-adenosyl-L-homocysteine + H(+). The protein operates within cofactor biosynthesis; ubiquinone biosynthesis. In terms of biological role, O-methyltransferase that catalyzes the 2 O-methylation steps in the ubiquinone biosynthetic pathway. This Acinetobacter baumannii (strain AB307-0294) protein is Ubiquinone biosynthesis O-methyltransferase.